Reading from the N-terminus, the 486-residue chain is Ribulose bisphosphate carboxylase large chain (486 aa).

Substrate is bound by residues asparagine 125 and threonine 175. Residue lysine 177 is the Proton acceptor of the active site. Residue lysine 179 participates in substrate binding. Lysine 203, aspartate 205, and glutamate 206 together coordinate Mg(2+). Lysine 203 carries the post-translational modification N6-carboxylysine. The active-site Proton acceptor is histidine 295. Residues arginine 296, histidine 328, and serine 380 each contribute to the substrate site.

Belongs to the RuBisCO large chain family. Type I subfamily. In terms of assembly, heterohexadecamer of 8 large chains and 8 small chains. Mg(2+) serves as cofactor.

The enzyme catalyses 2 (2R)-3-phosphoglycerate + 2 H(+) = D-ribulose 1,5-bisphosphate + CO2 + H2O. It carries out the reaction D-ribulose 1,5-bisphosphate + O2 = 2-phosphoglycolate + (2R)-3-phosphoglycerate + 2 H(+). In terms of biological role, ruBisCO catalyzes two reactions: the carboxylation of D-ribulose 1,5-bisphosphate, the primary event in carbon dioxide fixation, as well as the oxidative fragmentation of the pentose substrate. Both reactions occur simultaneously and in competition at the same active site. The chain is Ribulose bisphosphate carboxylase large chain from Afipia carboxidovorans (strain ATCC 49405 / DSM 1227 / KCTC 32145 / OM5) (Oligotropha carboxidovorans).